Reading from the N-terminus, the 674-residue chain is DNA ligase (674 aa).

Residues 36–40 (DSVYD), 85–86 (SL), and E116 each bind NAD(+). K118 serves as the catalytic N6-AMP-lysine intermediate. 4 residues coordinate NAD(+): R139, E176, K292, and K316. The Zn(2+) site is built by C410, C413, C428, and C433. One can recognise a BRCT domain in the interval 596 to 674 (PSSGNIAGKT…EADLLKFLTN (79 aa)).

Belongs to the NAD-dependent DNA ligase family. LigA subfamily. Mg(2+) serves as cofactor. Requires Mn(2+) as cofactor.

The enzyme catalyses NAD(+) + (deoxyribonucleotide)n-3'-hydroxyl + 5'-phospho-(deoxyribonucleotide)m = (deoxyribonucleotide)n+m + AMP + beta-nicotinamide D-nucleotide.. Its function is as follows. DNA ligase that catalyzes the formation of phosphodiester linkages between 5'-phosphoryl and 3'-hydroxyl groups in double-stranded DNA using NAD as a coenzyme and as the energy source for the reaction. It is essential for DNA replication and repair of damaged DNA. This is DNA ligase from Rippkaea orientalis (strain PCC 8801 / RF-1) (Cyanothece sp. (strain PCC 8801)).